We begin with the raw amino-acid sequence, 240 residues long: Zein-alpha A20 (240 aa).

A signal peptide spans 1–21 (MATKIFSLLMLLALSACVANA).

Belongs to the zein family.

Zeins are major seed storage proteins. This is Zein-alpha A20 from Zea mays (Maize).